Consider the following 297-residue polypeptide: Small ribosomal subunit protein uS2 (297 aa).

Positions 266-297 are disordered; it reads GASWDAAEPSDWAATPAAAGQEWAASGATEQW. The segment covering 282 to 297 has biased composition (low complexity); it reads AAAGQEWAASGATEQW.

It belongs to the universal ribosomal protein uS2 family. In terms of assembly, component of the small ribosomal subunit. Mature ribosomes consist of a small (40S) and a large (60S) subunit. The 40S subunit contains about 33 different proteins and 1 molecule of RNA (18S). The 60S subunit contains about 49 different proteins and 3 molecules of RNA (25S, 5.8S and 5S). Interacts with rps21.

The protein resides in the cytoplasm. Required for the assembly and/or stability of the 40S ribosomal subunit. Required for the processing of the 20S rRNA-precursor to mature 18S rRNA in a late step of the maturation of 40S ribosomal subunits. The sequence is that of Small ribosomal subunit protein uS2 (rps0) from Sclerotinia sclerotiorum (strain ATCC 18683 / 1980 / Ss-1) (White mold).